Here is a 166-residue protein sequence, read N- to C-terminus: Plastocyanin, chloroplastic (166 aa).

The N-terminal 67 residues, 1–67, are a transit peptide targeting the chloroplast; that stretch reads MASLTSAAVT…GAVLASNALA (67 aa). A Plastocyanin-like domain is found at 68–166; it reads VEVLLGGSDG…AGMAGKITVN (99 aa). His104, Cys151, His154, and Met159 together coordinate Cu cation.

It belongs to the plastocyanin family. Cu(2+) is required as a cofactor.

It localises to the plastid. Its subcellular location is the chloroplast thylakoid membrane. Participates in electron transfer between P700 and the cytochrome b6-f complex in photosystem I. The protein is Plastocyanin, chloroplastic (PETE) of Fritillaria agrestis (Stinkbells).